Consider the following 121-residue polypeptide: Tachykinin-3 (121 aa).

The first 16 residues, 1–16 (MRIMLLFTAILAFSLA), serve as a signal peptide directing secretion. The propeptide occupies 17-78 (QSFGAVCKEP…TDPKESTSPE (62 aa)). A Methionine amide modification is found at Met90. Residues 93-121 (RSVQPDSPTDVNQENVPSFGILKYPPRAE) form a disordered region. The propeptide occupies 94–121 (SVQPDSPTDVNQENVPSFGILKYPPRAE). The span at 96–108 (QPDSPTDVNQENV) shows a compositional bias: polar residues.

It belongs to the tachykinin family.

The protein localises to the secreted. Functionally, tachykinins are active peptides which excite neurons, evoke behavioral responses, are potent vasodilators and secretagogues, and contract (directly or indirectly) many smooth muscles. Is a critical central regulator of gonadal function. This is Tachykinin-3 (TAC3) from Homo sapiens (Human).